A 514-amino-acid chain; its full sequence is Probable E3 ubiquitin-protein ligase ARI10 (514 aa).

Residues 1 to 18 show a composition bias toward acidic residues; sequence MDYSDDDMIDNESGEENN. The segment at 1–26 is disordered; it reads MDYSDDDMIDNESGEENNSDGGGNES. Positions 117–322 are TRIAD supradomain; it reads VDIQCGICFE…SDHYACNNYV (206 aa). Positions 121, 124, 138, 140, 143, 146, 166, 171, 210, 215, 231, 233, 238, 241, 246, 251, 278, and 281 each coordinate Zn(2+). Residues 121-171 form an RING-type 1 zinc finger; that stretch reads CGICFESYTRKEIASVSCGHPYCKTCWTGYITTKIEDGPGCLRVKCPEPSC. The segment at 190 to 251 adopts an IBR-type zinc-finger fold; that stretch reads DKYYRYFLRS…SEDAHSPVDC (62 aa). The segment at 278–308 adopts an RING-type 2; atypical zinc-finger fold; sequence CPKCKRPIEKSHGCNHMTCSASCGHRFCWIC. Residue C291 is part of the active site. Positions 296, 300, 305, 308, 315, and 318 each coordinate Zn(2+).

This sequence belongs to the RBR family. Ariadne subfamily. It depends on Zn(2+) as a cofactor.

The catalysed reaction is [E2 ubiquitin-conjugating enzyme]-S-ubiquitinyl-L-cysteine + [acceptor protein]-L-lysine = [E2 ubiquitin-conjugating enzyme]-L-cysteine + [acceptor protein]-N(6)-ubiquitinyl-L-lysine.. Its pathway is protein modification; protein ubiquitination. In terms of biological role, might act as an E3 ubiquitin-protein ligase, or as part of E3 complex, which accepts ubiquitin from specific E2 ubiquitin-conjugating enzymes and then transfers it to substrates. The polypeptide is Probable E3 ubiquitin-protein ligase ARI10 (ARI10) (Arabidopsis thaliana (Mouse-ear cress)).